A 730-amino-acid polypeptide reads, in one-letter code: Propionyl-CoA carboxylase alpha chain, mitochondrial (730 aa).

The N-terminal 52 residues, 1–52, are a transit peptide targeting the mitochondrion; the sequence is MAGLWVGGSVLVAAGRRGSRSPRPLMRSVALWTLKHVPQYSRQRLLVSRSLC. Positions 62 to 509 constitute a Biotin carboxylation domain; that stretch reads TFDKILIANR…NTKFLSDVYP (448 aa). Lys65 carries the N6-acetyllysine; alternate modification. Lys65 is subject to N6-succinyllysine; alternate. Lys119 is modified (N6-succinyllysine). Position 150 is an N6-acetyllysine; alternate (Lys150). Lys150 is subject to N6-succinyllysine; alternate. An N6-acetyllysine modification is found at Lys154. An ATP-binding site is contributed by Lys177. The 198-residue stretch at 181–378 folds into the ATP-grasp domain; sequence KLLAKKAKVN…LVQEMIRVAK (198 aa). An N6-succinyllysine modification is found at Lys188. At Lys200 the chain carries N6-acetyllysine; alternate. Lys200 is modified (N6-succinyllysine; alternate). ATP contacts are provided by residues 209–270, Glu261, and Asn296; that span reads AREI…PRHI. Ser252 is subject to Phosphoserine. Lys262 bears the N6-succinyllysine mark. Mg(2+) contacts are provided by Glu336, Glu349, and Asn351. 3 residues coordinate Mn(2+): Glu336, Glu349, and Asn351. Residue Glu349 is part of the active site. Lys407 is subject to N6-succinyllysine. Phe409 contacts biotin. Residues Lys502, Lys513, and Lys650 each carry the N6-succinyllysine modification. One can recognise a Biotinyl-binding domain in the interval 655–730; that stretch reads KAAEDTSSIL…GEGDLLVELE (76 aa). Residue Lys696 is modified to N6-biotinyllysine.

The holoenzyme is a dodecamer composed of 6 PCCA/alpha subunits and 6 PCCB/beta subunits. Interacts (via the biotin carboxylation domain) with SIRT4. Interacts with SIRT3 and SIRT5. Requires Mg(2+) as cofactor. The cofactor is Mn(2+). It depends on biotin as a cofactor. Post-translationally, acetylated. The biotin cofactor is covalently attached to the C-terminal biotinyl-binding domain and is required for the catalytic activity. Biotinylation is catalyzed by HLCS.

It is found in the mitochondrion matrix. It catalyses the reaction propanoyl-CoA + hydrogencarbonate + ATP = (S)-methylmalonyl-CoA + ADP + phosphate + H(+). The catalysed reaction is butanoyl-CoA + hydrogencarbonate + ATP = (2S)-ethylmalonyl-CoA + ADP + phosphate + H(+). It participates in metabolic intermediate metabolism; propanoyl-CoA degradation; succinyl-CoA from propanoyl-CoA: step 1/3. Its function is as follows. This is one of the 2 subunits of the biotin-dependent propionyl-CoA carboxylase (PCC), a mitochondrial enzyme involved in the catabolism of odd chain fatty acids, branched-chain amino acids isoleucine, threonine, methionine, and valine and other metabolites. Propionyl-CoA carboxylase catalyzes the carboxylation of propionyl-CoA/propanoyl-CoA to D-methylmalonyl-CoA/(S)-methylmalonyl-CoA. Within the holoenzyme, the alpha subunit catalyzes the ATP-dependent carboxylation of the biotin carried by the biotin carboxyl carrier (BCC) domain, while the beta subunit then tranfers the carboxyl group from carboxylated biotin to propionyl-CoA. Propionyl-CoA carboxylase also significantly acts on butyryl-CoA/butanoyl-CoA, which is converted to ethylmalonyl-CoA/(2S)-ethylmalonyl-CoA at a much lower rate. Other alternative minor substrates include (2E)-butenoyl-CoA/crotonoyl-CoA. The chain is Propionyl-CoA carboxylase alpha chain, mitochondrial from Sus scrofa (Pig).